The chain runs to 187 residues: Putative zinc finger protein 833 (187 aa).

6 consecutive C2H2-type zinc fingers follow at residues 10-32 (YKCK…ERTH), 38-60 (YECN…ARIH), 66-88 (YICK…ENTH), 94-116 (CECK…ERIH), 122-144 (YKCK…KSTH), and 150-172 (YECK…EGVH).

The polypeptide is Putative zinc finger protein 833 (ZNF833P) (Homo sapiens (Human)).